A 256-amino-acid polypeptide reads, in one-letter code: Type III pantothenate kinase (256 aa).

6-13 (DVGNTNTV) lines the ATP pocket. Substrate-binding positions include Tyr-100 and 107–110 (GADR). The active-site Proton acceptor is Asp-109. Asp-129 contributes to the K(+) binding site. Thr-132 is an ATP binding site. Residue Thr-184 participates in substrate binding.

It belongs to the type III pantothenate kinase family. As to quaternary structure, homodimer. The cofactor is NH4(+). K(+) serves as cofactor.

The protein localises to the cytoplasm. It catalyses the reaction (R)-pantothenate + ATP = (R)-4'-phosphopantothenate + ADP + H(+). It functions in the pathway cofactor biosynthesis; coenzyme A biosynthesis; CoA from (R)-pantothenate: step 1/5. Catalyzes the phosphorylation of pantothenate (Pan), the first step in CoA biosynthesis. This Myxococcus xanthus (strain DK1622) protein is Type III pantothenate kinase.